The following is a 506-amino-acid chain: ATP synthase subunit alpha, chloroplastic (506 aa).

Residue 170 to 177 (GDRQTGKT) participates in ATP binding.

It belongs to the ATPase alpha/beta chains family. As to quaternary structure, F-type ATPases have 2 components, CF(1) - the catalytic core - and CF(0) - the membrane proton channel. CF(1) has five subunits: alpha(3), beta(3), gamma(1), delta(1), epsilon(1). CF(0) has four main subunits: a, b, b' and c.

It localises to the plastid. The protein localises to the chloroplast thylakoid membrane. The enzyme catalyses ATP + H2O + 4 H(+)(in) = ADP + phosphate + 5 H(+)(out). Produces ATP from ADP in the presence of a proton gradient across the membrane. The alpha chain is a regulatory subunit. In Chlorokybus atmophyticus (Soil alga), this protein is ATP synthase subunit alpha, chloroplastic.